The primary structure comprises 572 residues: Sorting nexin 2B (572 aa).

Disordered stretches follow at residues Met1–Leu97 and Ser114–Ser136. The segment covering Glu9–Pro30 has biased composition (basic and acidic residues). A compositionally biased stretch (polar residues) spans Thr32–Phe53. A compositionally biased stretch (low complexity) spans Ser124–Ser136. Position 133 is a phosphoserine (Ser133). The 120-residue stretch at Ser147 to Leu266 folds into the PX domain. A 1,2-diacyl-sn-glycero-3-phospho-(1D-myo-inositol-3-phosphate)-binding residues include Arg190, Lys216, and Arg233. Residues Leu318–Ser572 enclose the BAR domain.

This sequence belongs to the sorting nexin family. As to quaternary structure, homodimer. Heterodimer with SNX1 or SNX2B. Component of the retromer complex which consists of VPS29 (MAG1), VPS26 (VPS26A or VPS26B), VPS35 (VPS35A or VPS35B or VPS35C), VPS5/17 (SNX1 or SNX2A or SNX2B). In terms of tissue distribution, ubiquitously expressed.

The protein resides in the cytoplasm. The protein localises to the endosome membrane. It localises to the prevacuolar compartment membrane. Its subcellular location is the golgi apparatus. It is found in the trans-Golgi network membrane. Its function is as follows. Plays a role in vesicular protein sorting. Acts at the crossroads between the secretory and endocytic pathways. Is involved in the endosome to vacuole protein transport and, as component of the membrane-associated retromer complex, is also involved in endosome-to-Golgi retrograde transport. This Arabidopsis thaliana (Mouse-ear cress) protein is Sorting nexin 2B (SNX2B).